Consider the following 249-residue polypeptide: ATP synthase subunit a, chloroplastic (249 aa).

5 helical membrane passes run 38–58 (AQVL…AVLA), 97–117 (VPFI…GALL), 136–156 (INTT…AGLH), 201–221 (LVVA…MMFL), and 222–242 (GLFT…AYIG).

Belongs to the ATPase A chain family. As to quaternary structure, F-type ATPases have 2 components, CF(1) - the catalytic core - and CF(0) - the membrane proton channel. CF(1) has five subunits: alpha(3), beta(3), gamma(1), delta(1), epsilon(1). CF(0) has four main subunits: a, b, b' and c.

Its subcellular location is the plastid. The protein localises to the chloroplast thylakoid membrane. Functionally, key component of the proton channel; it plays a direct role in the translocation of protons across the membrane. The polypeptide is ATP synthase subunit a, chloroplastic (Physcomitrium patens (Spreading-leaved earth moss)).